Reading from the N-terminus, the 104-residue chain is MAEETPTRSPGGAAVLDKAPERVRKRSPRYKVLLHNDPVNSMEYVMTTLRQVVPQLSEQDAMAVMLEAHNTGVGLVIVCDIEPAEFYCETLKSKGLTSSIEPED.

The disordered stretch occupies residues 1–20 (MAEETPTRSPGGAAVLDKAP).

This sequence belongs to the ClpS family. In terms of assembly, binds to the N-terminal domain of the chaperone ClpA.

In terms of biological role, involved in the modulation of the specificity of the ClpAP-mediated ATP-dependent protein degradation. This Synechococcus sp. (strain CC9902) protein is ATP-dependent Clp protease adapter protein ClpS.